The following is a 562-amino-acid chain: NAD-dependent malic enzyme (562 aa).

The Proton donor role is filled by tyrosine 101. Arginine 154 provides a ligand contact to NAD(+). The active-site Proton acceptor is the lysine 172. A divalent metal cation is bound by residues glutamate 243, aspartate 244, and aspartate 267. Residues aspartate 267 and asparagine 415 each coordinate NAD(+).

The protein belongs to the malic enzymes family. In terms of assembly, homotetramer. Mg(2+) is required as a cofactor. Mn(2+) serves as cofactor.

It carries out the reaction (S)-malate + NAD(+) = pyruvate + CO2 + NADH. The catalysed reaction is oxaloacetate + H(+) = pyruvate + CO2. This Vibrio campbellii (strain ATCC BAA-1116) protein is NAD-dependent malic enzyme.